A 64-amino-acid polypeptide reads, in one-letter code: Phylloxin-B1 (64 aa).

A signal peptide spans 1 to 22 (MVFLKKSLLLVLFVGLVSLSIC). Positions 23 to 42 (EENKREEHEEIEENKEKAEE) are excised as a propeptide. The residue at position 63 (Q63) is a Glutamine amide.

Expressed by the skin glands.

Its subcellular location is the secreted. Its function is as follows. Antimicrobial peptide against the wall-less bacteria A.laidlawii and S.melliferum, the Gram-positive bacteria B.megaterium KM, C.glutamicum ATCC 27853 and M.luteus ATCC 27853 and the Gram-negative-bacteria R.meliloti 102F34 and E.coli K12. The polypeptide is Phylloxin-B1 (Phyllomedusa bicolor (Two-colored leaf frog)).